The following is a 232-amino-acid chain: (S)-2-haloacid dehalogenase (232 aa).

Aspartate 10 acts as the Nucleophile in catalysis. Residues 11 to 12 (LY), arginine 41, and 118 to 119 (SN) each bind an (S)-2-haloacid. Positions 175 to 180 (SSNAWD) are important for catalytic activity.

This sequence belongs to the HAD-like hydrolase superfamily. S-2-haloalkanoic acid dehalogenase family. As to quaternary structure, homodimer.

The enzyme catalyses an (S)-2-haloacid + H2O = a (2R)-2-hydroxycarboxylate + a halide anion + H(+). It carries out the reaction (S)-2-chloropropanoate + H2O = (R)-lactate + chloride + H(+). In terms of biological role, catalyzes the hydrolytic dehalogenation of small (S)-2-haloalkanoic acids to yield the corresponding (R)-2-hydroxyalkanoic acids. Acts on acids of short chain lengths, C(2) to C(4), with inversion of configuration at C-2. Active with 2-halogenated carboxylic acids and converts only the S-isomer (or L-isomer) of 2-chloropropionic acid with inversion of configuration to produce R-lactate (or D-isomer). This chain is (S)-2-haloacid dehalogenase, found in Pseudomonas sp. (strain YL).